A 2083-amino-acid polypeptide reads, in one-letter code: Non-reducing polyketide synthase curS2 (2083 aa).

The tract at residues 9-246 (LLFGDVTDPW…NELDIHALQH (238 aa)) is N-terminal acylcarrier protein transacylase domain (SAT). The 433-residue stretch at 366 to 798 (RDGIAIVGMA…GGNACLLLED (433 aa)) folds into the Ketosynthase family 3 (KS3) domain. Active-site for beta-ketoacyl synthase activity residues include cysteine 543, histidine 678, and histidine 717. The malonyl-CoA:ACP transacylase (MAT) domain stretch occupies residues 895–1201 (VFVFTGQGSH…THTLQPNTHN (307 aa)). Serine 986 (for acyl/malonyl transferase activity) is an active-site residue. Positions 1276-1415 (AQYLVSKSSS…DPAKTQADWD (140 aa)) are N-terminal hotdog fold. Residues 1276 to 1585 (AQYLVSKSSS…YQELPRVTWK (310 aa)) form the PKS/mFAS DH domain. The interval 1285 to 1581 (SPKVQVVFRA…IDLRYQELPR (297 aa)) is product template (PT) domain. A C-terminal hotdog fold region spans residues 1437–1585 (GHRMQPEVFY…YQELPRVTWK (149 aa)). One can recognise a Carrier domain in the interval 1637–1714 (DFDEGLVDAI…DLRRAFGANK (78 aa)). Serine 1674 is subject to O-(pantetheine 4'-phosphoryl)serine. Positions 1710–1790 (FGANKPKTSK…KMDETDTSPA (81 aa)) are disordered. Over residues 1718 to 1736 (SKPQPGSTTPSSSQSSIPS) the composition is skewed to low complexity. Residues 1745–1754 (MSDTASSLGS) are compositionally biased toward polar residues. Basic and acidic residues predominate over residues 1771–1784 (LEPKPNHHLGKMDE). The interval 1811 to 2058 (MMADGTGTIA…LSVAGDHLDL (248 aa)) is thioesterase (TE) domain. Histidine 2065 serves as the catalytic For thioesterase activity.

It participates in mycotoxin biosynthesis. Its function is as follows. Non-reducing polyketide synthase; part of the gene cluster that mediates the biosynthesis of 10,11-dehydrocurvularin, a prevalent fungal phytotoxin with heat shock response and immune-modulatory activities. The highly reducing polyketide synthase curS1 is responsible for biosynthesis up to the tetraketide stage. The non-reducing polyketide synthase curS2 then conducts four additional chain extension cycles, producing the unreduced part of the nascent octaketide from C-1 to C-8 in 10,11-dehydrocurvularin. The polypeptide is Non-reducing polyketide synthase curS2 (Aspergillus terreus).